A 368-amino-acid polypeptide reads, in one-letter code: Isopentenyl-diphosphate delta-isomerase (368 aa).

Residue arginine 7 to lysine 8 participates in substrate binding. Residues threonine 65, glycine 66–threonine 68, serine 96, and asparagine 125 contribute to the FMN site. Serine 96–arginine 98 serves as a coordination point for substrate. Residue glutamine 160 participates in substrate binding. Glutamate 161 provides a ligand contact to Mg(2+). FMN is bound by residues lysine 193, serine 218, threonine 223, glycine 275–arginine 277, and alanine 296–leucine 297.

This sequence belongs to the IPP isomerase type 2 family. As to quaternary structure, homooctamer. Dimer of tetramers. The cofactor is FMN. NADPH is required as a cofactor. It depends on Mg(2+) as a cofactor.

The protein localises to the cytoplasm. It catalyses the reaction isopentenyl diphosphate = dimethylallyl diphosphate. Functionally, involved in the biosynthesis of isoprenoids. Catalyzes the 1,3-allylic rearrangement of the homoallylic substrate isopentenyl (IPP) to its allylic isomer, dimethylallyl diphosphate (DMAPP). The protein is Isopentenyl-diphosphate delta-isomerase of Saccharolobus islandicus (strain L.S.2.15 / Lassen #1) (Sulfolobus islandicus).